A 249-amino-acid chain; its full sequence is 5'-nucleotidase SurE (249 aa).

Residues D8, D9, S39, and N91 each contribute to the a divalent metal cation site.

Belongs to the SurE nucleotidase family. The cofactor is a divalent metal cation.

The protein localises to the cytoplasm. The enzyme catalyses a ribonucleoside 5'-phosphate + H2O = a ribonucleoside + phosphate. Nucleotidase that shows phosphatase activity on nucleoside 5'-monophosphates. The chain is 5'-nucleotidase SurE from Pseudomonas syringae pv. syringae (strain B728a).